Consider the following 103-residue polypeptide: O2 contryphan Vc1 (103 aa).

The signal sequence occupies residues M1 to G23. Residues D24–R67 constitute a propeptide that is removed on maturation. Over residues G25–D44 the composition is skewed to basic and acidic residues. A disordered region spans residues G25–P50. Q68 is subject to Pyrrolidone carboxylic acid. C70 and C83 form a disulfide bridge. A propeptide spanning residues R99–Q103 is cleaved from the precursor.

The protein belongs to the O2 superfamily. In terms of processing, pyrrolidone carboxylic acid at position 1 has no significant effect on the structure of contryphan-Vc1. In terms of tissue distribution, expressed by the venom gland.

The protein resides in the secreted. In terms of biological role, unknown. Intracranial injection of the peptide into mice does not produce toxic effects. In addition, the peptide does not produce any observable changes to normal or depolarization-induced intracellular calcium levels in mouse dorsal root ganglion cells. This Conus victoriae (Queen Victoria cone) protein is O2 contryphan Vc1.